Reading from the N-terminus, the 178-residue chain is S-alkylcysteine N-acetyltransferase (178 aa).

One can recognise an N-acetyltransferase domain in the interval 4–163 (DIFRLATVED…IGVMMHKVLI (160 aa)).

Belongs to the acetyltransferase family.

The catalysed reaction is an S-substituted L-cysteine + acetyl-CoA = an N-acetyl-L-cysteine-S-conjugate + CoA + H(+). The enzyme catalyses S-benzyl-L-cysteine + acetyl-CoA = N-acetyl-S-benzyl-L-cysteine + CoA + H(+). It catalyses the reaction S-methyl-L-cysteine + acetyl-CoA = N-acetyl-S-methyl-L-cysteine + CoA + H(+). It functions in the pathway amino-acid metabolism. Its function is as follows. Involved in a cysteine salvage pathway from S-alkylcysteine. Catalyzes the first step in this pathway, i.e. the amine acetylation of an S-alkylcysteine with a preference for S-benzyl-L-cysteine over S-methyl-L-cysteine. This pathway is likely important in the catabolism of alkylated cysteine generated by proteolysis of alkylated glutathione formed in the detoxification of a wide range of electrophiles. The polypeptide is S-alkylcysteine N-acetyltransferase (Bacillus subtilis (strain 168)).